Reading from the N-terminus, the 121-residue chain is Holo-[acyl-carrier-protein] synthase (121 aa).

Mg(2+) is bound by residues Asp-6 and Glu-55.

Belongs to the P-Pant transferase superfamily. AcpS family. Requires Mg(2+) as cofactor.

The protein localises to the cytoplasm. The enzyme catalyses apo-[ACP] + CoA = holo-[ACP] + adenosine 3',5'-bisphosphate + H(+). In terms of biological role, transfers the 4'-phosphopantetheine moiety from coenzyme A to a Ser of acyl-carrier-protein. The sequence is that of Holo-[acyl-carrier-protein] synthase from Chloroherpeton thalassium (strain ATCC 35110 / GB-78).